The following is a 196-amino-acid chain: Pro-FMRFamide-related neuropeptide VF (196 aa).

The first 21 residues, 1 to 21 (MEIISLKRFILLMLATSSLLT), serve as a signal peptide directing secretion. Residues 22 to 57 (SNIFCTDESRMPNLYSKKNYDKYSEPRGDLGWEKER) constitute a propeptide that is removed on maturation. Phenylalanine amide is present on Phe92. Propeptides lie at residues 95 to 99 (NMEEE) and 115 to 121 (NREDSLS). Phenylalanine amide is present on Phe131. Positions 134-196 (TTTAKSITKT…IDDAELKQEK (63 aa)) are excised as a propeptide.

This sequence belongs to the FARP (FMRFamide related peptide) family.

The protein resides in the secreted. Efficiently inhibits forskolin-induced production of cAMP. Acts as a potent negative regulator of gonadotropin synthesis and secretion. Induces secretion of prolactin. Functionally, efficiently inhibits forskolin-induced production of cAMP. Blocks morphine-induced analgesia. In terms of biological role, shows no inhibitory activity of forskolin-induced production of cAMP. The chain is Pro-FMRFamide-related neuropeptide VF (NPVF) from Bos taurus (Bovine).